A 318-amino-acid chain; its full sequence is MRIVVLAGGIGGARFLRGLKQAAPDADITVIGNTGDDIHLFGLKVCPDLDTVMYTLGGGINEEQGWGRTDETFQVKEELAAYGVGPGWFGLGDRDFATHIVRTQMLGAGYPLSAVTEALCARWQPGVRLLPMSDDRVETHVAVETDGESKAIHFQEYWVKLRASVEAQAIVPVGAEQAKPAPGVLEAIGSADVIVFPPSNPVVSIGTILAVPGIREAIAEAGVPVVGLSPIVGDAPVRGMADKVLAAVGVESTAAAVARHYGSGLLDGWLVDTVDAGAVEEVEAAGIRCRAVPLMMTDVDATAAMARQALELAEEVRA.

Residue D50 coordinates 7,8-didemethyl-8-hydroxy-5-deazariboflavin.

The protein belongs to the CofD family. As to quaternary structure, homodimer. Mg(2+) serves as cofactor.

It catalyses the reaction enolpyruvoyl-2-diphospho-5'-guanosine + 7,8-didemethyl-8-hydroxy-5-deazariboflavin = dehydro coenzyme F420-0 + GMP + H(+). It functions in the pathway cofactor biosynthesis; coenzyme F420 biosynthesis. Its function is as follows. Catalyzes the transfer of the phosphoenolpyruvate moiety from enoylpyruvoyl-2-diphospho-5'-guanosine (EPPG) to 7,8-didemethyl-8-hydroxy-5-deazariboflavin (FO) with the formation of dehydro coenzyme F420-0 and GMP. This is Phosphoenolpyruvate transferase from Streptomyces griseus subsp. griseus (strain JCM 4626 / CBS 651.72 / NBRC 13350 / KCC S-0626 / ISP 5235).